Consider the following 295-residue polypeptide: Pyridoxal 5'-phosphate synthase subunit PdxS (295 aa).

Asp-25 contributes to the D-ribose 5-phosphate binding site. The Schiff-base intermediate with D-ribose 5-phosphate role is filled by Lys-82. Gly-154 serves as a coordination point for D-ribose 5-phosphate. Arg-166 is a D-glyceraldehyde 3-phosphate binding site. Residues Gly-215 and 236–237 (GS) contribute to the D-ribose 5-phosphate site.

This sequence belongs to the PdxS/SNZ family. In the presence of PdxT, forms a dodecamer of heterodimers.

The catalysed reaction is aldehydo-D-ribose 5-phosphate + D-glyceraldehyde 3-phosphate + L-glutamine = pyridoxal 5'-phosphate + L-glutamate + phosphate + 3 H2O + H(+). It functions in the pathway cofactor biosynthesis; pyridoxal 5'-phosphate biosynthesis. Functionally, catalyzes the formation of pyridoxal 5'-phosphate from ribose 5-phosphate (RBP), glyceraldehyde 3-phosphate (G3P) and ammonia. The ammonia is provided by the PdxT subunit. Can also use ribulose 5-phosphate and dihydroxyacetone phosphate as substrates, resulting from enzyme-catalyzed isomerization of RBP and G3P, respectively. This is Pyridoxal 5'-phosphate synthase subunit PdxS from Bacillus mycoides (strain KBAB4) (Bacillus weihenstephanensis).